A 353-amino-acid chain; its full sequence is UDP-N-acetylglucosamine--N-acetylmuramyl-(pentapeptide) pyrophosphoryl-undecaprenol N-acetylglucosamine transferase (353 aa).

Residues 10-12 (TGG), N124, S183, and Q283 each bind UDP-N-acetyl-alpha-D-glucosamine.

The protein belongs to the glycosyltransferase 28 family. MurG subfamily.

The protein resides in the cell inner membrane. It catalyses the reaction di-trans,octa-cis-undecaprenyl diphospho-N-acetyl-alpha-D-muramoyl-L-alanyl-D-glutamyl-meso-2,6-diaminopimeloyl-D-alanyl-D-alanine + UDP-N-acetyl-alpha-D-glucosamine = di-trans,octa-cis-undecaprenyl diphospho-[N-acetyl-alpha-D-glucosaminyl-(1-&gt;4)]-N-acetyl-alpha-D-muramoyl-L-alanyl-D-glutamyl-meso-2,6-diaminopimeloyl-D-alanyl-D-alanine + UDP + H(+). It functions in the pathway cell wall biogenesis; peptidoglycan biosynthesis. Cell wall formation. Catalyzes the transfer of a GlcNAc subunit on undecaprenyl-pyrophosphoryl-MurNAc-pentapeptide (lipid intermediate I) to form undecaprenyl-pyrophosphoryl-MurNAc-(pentapeptide)GlcNAc (lipid intermediate II). This Helicobacter pylori (strain Shi470) protein is UDP-N-acetylglucosamine--N-acetylmuramyl-(pentapeptide) pyrophosphoryl-undecaprenol N-acetylglucosamine transferase.